The primary structure comprises 60 residues: Mastoparan-VT3 (60 aa).

The first 27 residues, 1–27, serve as a signal peptide directing secretion; that stretch reads MKNTILILFTAFIALLGFFGMSAEALA. 4 AXPX repeats span residues 27-30, 31-34, 35-38, and 41-44; these read ADPK, ADPL, AGPN, and ADPE. Residues 28-45 constitute a propeptide that is removed on maturation; that stretch reads DPKADPLAGPNPDADPEA. Leu-59 carries the post-translational modification Leucine amide.

This sequence belongs to the MCD family. Mastoparan subfamily. As to expression, expressed by the venom gland.

Its subcellular location is the secreted. Its function is as follows. The synthetic peptide shows antimicrobial activities against Gram-negative bacteria (but not against all strains tested), Gram-positive bacteria (all strains tested) and the fungi C.albicans and C.parapsilosis. Exhibits moderate hemolytic activity (25% at 100 ug/ml) against washed human erythrocytes. The polypeptide is Mastoparan-VT3 (Vespa tropica (Greater banded hornet)).